Here is a 126-residue protein sequence, read N- to C-terminus: Aspartate 1-decarboxylase (126 aa).

Catalysis depends on Ser25, which acts as the Schiff-base intermediate with substrate; via pyruvic acid. Position 25 is a pyruvic acid (Ser) (Ser25). Substrate is bound at residue Thr57. Tyr58 acts as the Proton donor in catalysis. 73-75 (GAA) is a binding site for substrate.

The protein belongs to the PanD family. As to quaternary structure, heterooctamer of four alpha and four beta subunits. Pyruvate serves as cofactor. Post-translationally, is synthesized initially as an inactive proenzyme, which is activated by self-cleavage at a specific serine bond to produce a beta-subunit with a hydroxyl group at its C-terminus and an alpha-subunit with a pyruvoyl group at its N-terminus.

It is found in the cytoplasm. It catalyses the reaction L-aspartate + H(+) = beta-alanine + CO2. The protein operates within cofactor biosynthesis; (R)-pantothenate biosynthesis; beta-alanine from L-aspartate: step 1/1. In terms of biological role, catalyzes the pyruvoyl-dependent decarboxylation of aspartate to produce beta-alanine. This Marinomonas sp. (strain MWYL1) protein is Aspartate 1-decarboxylase.